Reading from the N-terminus, the 468-residue chain is MTLKSGRGGGGGSGSMRTALSDLYLEHLLQNRAKPEAIAQAPNAMTEDIYTNGSATLGSPSHSNGREVRKIRLVQFEKVTEEPMGITLKLNDKQSCMVARIFHGGMIHRQGSLHVGDEIIEINGQSVSNHSVDQLQKMLKETQGMVSIKVIPNQQSRLPALQMFMRAQFDYDPKKDNLIPCKEAGLKFQTGDVIQIINKDDSNWWQGRVEGSGTESAGLIPSPELQEWRVASVTQSSQSEAQSCSPFGKKKKYKDKYLAKHSSIFDQLDVVSYEEVVRLPAFKRKTLVLIGASGVGRSHIKNALLSNNPEKFMYPPPYTTRPQKKNEVDGKDYYFVSTEEMTRDISANEFLEFGSYQGNMFGTKFETVHKIHQQDKVAILDIEPQTLKIVRTAELSPFIVFIAPTDKAEESEALQQLRKDSESIRSRYAHYFDLSIVNNGVEESLKLLEEAFEQACSSPQWVPVSWVY.

A PDZ domain is found at 73-154 (LVQFEKVTEE…MVSIKVIPNQ (82 aa)). One can recognise an SH3 domain in the interval 160–230 (ALQMFMRAQF…PSPELQEWRV (71 aa)). The Guanylate kinase-like domain maps to 284-453 (RKTLVLIGAS…SLKLLEEAFE (170 aa)).

Belongs to the MAGUK family.

It is found in the membrane. The protein localises to the cell projection. It localises to the stereocilium. May play a role in the regulation of neutrophil polarization. In Gallus gallus (Chicken), this protein is 55 kDa erythrocyte membrane protein (MPP1).